The sequence spans 556 residues: Formate--tetrahydrofolate ligase (556 aa).

Threonine 65–serine 72 serves as a coordination point for ATP.

This sequence belongs to the formate--tetrahydrofolate ligase family.

It carries out the reaction (6S)-5,6,7,8-tetrahydrofolate + formate + ATP = (6R)-10-formyltetrahydrofolate + ADP + phosphate. The protein operates within one-carbon metabolism; tetrahydrofolate interconversion. The sequence is that of Formate--tetrahydrofolate ligase from Clostridium perfringens (strain 13 / Type A).